A 118-amino-acid polypeptide reads, in one-letter code: Basic phospholipase A2 PA-12A (118 aa).

Disulfide bonds link Cys-11/Cys-71, Cys-27/Cys-117, Cys-29/Cys-45, Cys-44/Cys-98, Cys-51/Cys-91, Cys-60/Cys-84, and Cys-78/Cys-89. Ca(2+) contacts are provided by Tyr-28, Gly-30, and Gly-32. His-48 is a catalytic residue. Asp-49 contacts Ca(2+). The active site involves Asp-92.

This sequence belongs to the phospholipase A2 family. Group I subfamily. D49 sub-subfamily. Ca(2+) is required as a cofactor. Expressed by the venom gland.

It is found in the secreted. The catalysed reaction is a 1,2-diacyl-sn-glycero-3-phosphocholine + H2O = a 1-acyl-sn-glycero-3-phosphocholine + a fatty acid + H(+). Functionally, PLA2 catalyzes the calcium-dependent hydrolysis of the 2-acyl groups in 3-sn-phosphoglycerides. In Pseudechis australis (Mulga snake), this protein is Basic phospholipase A2 PA-12A.